The following is a 412-amino-acid chain: Putative competence-damage inducible protein (412 aa).

Belongs to the CinA family.

The chain is Putative competence-damage inducible protein from Bacillus cereus (strain AH187).